We begin with the raw amino-acid sequence, 113 residues long: uncharacterized protein (113 aa).

This is an uncharacterized protein from Escherichia coli O6:H1 (strain CFT073 / ATCC 700928 / UPEC).